A 101-amino-acid chain; its full sequence is Anti-sigma factor RshA (101 aa).

The inhibits SigH sigma factor activity stretch occupies residues 9-15 (DAHADHD). Cys-23 lines the iron-sulfur cluster pocket. Inhibits SigH sigma factor activity stretches follow at residues 28 to 34 (AEVWTLL) and 38 to 44 (CTPETRE). Iron-sulfur cluster-binding residues include His-49, Cys-53, and Cys-56. Thr-94 is modified (phosphothreonine).

It belongs to the zinc-associated anti-sigma factor (ZAS) superfamily. In terms of assembly, interacts with cognate sigma factor SigH under reducing conditions. Binding inhibits the interaction of SigH with the RNA polymerase catalytic core. It depends on iron-sulfur cluster as a cofactor. Phosphorylated, probably by PknB. Phosphorylation decreases interaction with SigH, leading to increased SigH-mediated transcription.

In terms of biological role, an redox-regulated anti-sigma factor for extracytoplasmic function (ECF) sigma factor SigH. ECF sigma factors are held in an inactive form by a cognate anti-sigma factor. RshA and some peptides derived from it inhibit the sigma factor activity of SigH. Probably releases SigH during oxidative stress. This chain is Anti-sigma factor RshA (rshA), found in Mycobacterium tuberculosis (strain CDC 1551 / Oshkosh).